Reading from the N-terminus, the 204-residue chain is Quinol oxidase subunit 3 (204 aa).

A run of 5 helical transmembrane segments spans residues 27–47 (FWIF…TFFV), 66–86 (LVMI…IAVH), 95–115 (GVVI…GCEI), 140–160 (LLGT…GILI), and 184–204 (FLDV…LGGL).

This sequence belongs to the cytochrome c oxidase subunit 3 family.

Its subcellular location is the cell membrane. It carries out the reaction 2 a quinol + O2 = 2 a quinone + 2 H2O. Functionally, catalyzes quinol oxidation with the concomitant reduction of oxygen to water. Major component for energy conversion during vegetative growth. This chain is Quinol oxidase subunit 3 (qoxC), found in Bacillus spizizenii (strain ATCC 23059 / NRRL B-14472 / W23) (Bacillus subtilis subsp. spizizenii).